Reading from the N-terminus, the 424-residue chain is Spore coat protein SP60 (424 aa).

A signal peptide spans 1-23 (MKILSLLVVGALCMGGKVYGEVN). Follistatin-like domains follow at residues 52-74 (DCST…RQCV), 85-109 (KCDN…ALCV), 117-139 (VCRT…ECCV), 184-206 (ICRL…ECCV), 215-234 (DLKC…SKCC), and 299-322 (RCDD…LSCE). A disordered region spans residues 330–424 (RSLDWAENEN…FQDANDEWDY (95 aa)). Acidic residues-rich tracts occupy residues 335–357 (AENE…YDGD) and 365–424 (YDGD…EWDY).

This chain is Spore coat protein SP60 (cotC), found in Dictyostelium discoideum (Social amoeba).